The sequence spans 106 residues: Urease subunit beta (106 aa).

The protein belongs to the urease beta subunit family. In terms of assembly, heterotrimer of UreA (gamma), UreB (beta) and UreC (alpha) subunits. Three heterotrimers associate to form the active enzyme.

It is found in the cytoplasm. It catalyses the reaction urea + 2 H2O + H(+) = hydrogencarbonate + 2 NH4(+). The protein operates within nitrogen metabolism; urea degradation; CO(2) and NH(3) from urea (urease route): step 1/1. The polypeptide is Urease subunit beta (Prochlorococcus marinus (strain MIT 9312)).